We begin with the raw amino-acid sequence, 166 residues long: Nicotine metabolites export pump subunit NepB (166 aa).

4 helical membrane-spanning segments follow: residues 51-71 (LHAW…TVIL), 77-97 (FQLP…FFLL), 108-128 (VAYA…GAII), and 133-153 (VTLG…ILNL).

This sequence belongs to the drug/metabolite transporter (DMT) superfamily. Small multidrug resistance (SMR) (TC 2.A.7.1) family. NepA/NepB subfamily. As to quaternary structure, the efflux pump is composed of NepA and NepB.

It localises to the cell membrane. Component of an efflux pump responsible for the transport of nicotine breakdown products, in particular methylamine, out of the cell. This pump apparently serves as a metabolic valve for nicotine catabolites and may protect the bacteria from the potentially toxic side effects of these compounds. This chain is Nicotine metabolites export pump subunit NepB (nepB), found in Paenarthrobacter nicotinovorans (Arthrobacter nicotinovorans).